Consider the following 352-residue polypeptide: Pejvakin (352 aa).

Belongs to the gasdermin family. As to quaternary structure, interacts with MAP1LC3B; interaction is direct. Interacts with IQGAP1. Interacts with ROCK2. Interacts with TRIOBP.

It is found in the peroxisome membrane. The protein localises to the cell projection. It localises to the cilium. Its function is as follows. Peroxisome-associated protein required to protect auditory hair cells against noise-induced damage. Acts by regulating noise-induced peroxisome proliferation in auditory hair cells and neurons, and promoting autophagic degradation of damaged peroxisomes (pexophagy). Noise overexposure increases reactive oxygen species (ROS) levels, causing oxidative damage to auditory hair cells and resulting in hearing loss. PJVK acts as a ROS sensor that recruits the autophagy machinery to trigger pexophagy of peroxisomes damaged by oxidative stress. In addition to pexophagy, also required to promote peroxisome proliferation in response to sound overstimulation. This is Pejvakin from Homo sapiens (Human).